Reading from the N-terminus, the 143-residue chain is Large ribosomal subunit protein uL11 (143 aa).

It belongs to the universal ribosomal protein uL11 family. Part of the ribosomal stalk of the 50S ribosomal subunit. Interacts with L10 and the large rRNA to form the base of the stalk. L10 forms an elongated spine to which L12 dimers bind in a sequential fashion forming a multimeric L10(L12)X complex. In terms of processing, one or more lysine residues are methylated.

In terms of biological role, forms part of the ribosomal stalk which helps the ribosome interact with GTP-bound translation factors. In Leptothrix cholodnii (strain ATCC 51168 / LMG 8142 / SP-6) (Leptothrix discophora (strain SP-6)), this protein is Large ribosomal subunit protein uL11.